The chain runs to 607 residues: Elongation factor 4 (607 aa).

The region spanning 11–193 (SKIRNFSIIA…QIVEKVPAPA (183 aa)) is the tr-type G domain. Residues 23 to 28 (DHGKST) and 140 to 143 (NKID) each bind GTP.

The protein belongs to the TRAFAC class translation factor GTPase superfamily. Classic translation factor GTPase family. LepA subfamily.

Its subcellular location is the cell membrane. It catalyses the reaction GTP + H2O = GDP + phosphate + H(+). Required for accurate and efficient protein synthesis under certain stress conditions. May act as a fidelity factor of the translation reaction, by catalyzing a one-codon backward translocation of tRNAs on improperly translocated ribosomes. Back-translocation proceeds from a post-translocation (POST) complex to a pre-translocation (PRE) complex, thus giving elongation factor G a second chance to translocate the tRNAs correctly. Binds to ribosomes in a GTP-dependent manner. The chain is Elongation factor 4 from Bacillus cereus (strain B4264).